Consider the following 1066-residue polypeptide: Ubiquitin conjugation factor E4 A (1066 aa).

Positions Gln-35–Ser-57 are disordered. Position 386 is an N6-acetyllysine (Lys-386). Residues Asp-987–Gln-1061 form the U-box domain.

It belongs to the ubiquitin conjugation factor E4 family.

The protein localises to the cytoplasm. The catalysed reaction is S-ubiquitinyl-[E2 ubiquitin-conjugating enzyme]-L-cysteine + [acceptor protein]-L-lysine = [E2 ubiquitin-conjugating enzyme]-L-cysteine + N(6)-ubiquitinyl-[acceptor protein]-L-lysine.. It functions in the pathway protein modification; protein ubiquitination. Functionally, ubiquitin-protein ligase that probably functions as an E3 ligase in conjunction with specific E1 and E2 ligases. May also function as an E4 ligase mediating the assembly of polyubiquitin chains on substrates ubiquitinated by another E3 ubiquitin ligase. Mediates 'Lys-48'-linked polyubiquitination of substrates. This is Ubiquitin conjugation factor E4 A from Rattus norvegicus (Rat).